Here is a 367-residue protein sequence, read N- to C-terminus: Dimethyladenosine transferase 1, mitochondrial (367 aa).

A mitochondrion-targeting transit peptide spans 1 to 16 (MASASRLPPLPALRDF). S-adenosyl-L-methionine is bound by residues 30-33 (QNYL), N31, L33, G58, E80, D106, and N141.

Belongs to the class I-like SAM-binding methyltransferase superfamily. rRNA adenine N(6)-methyltransferase family. KsgA subfamily.

The protein localises to the mitochondrion. Functionally, probable S-adenosyl-L-methionine-dependent methyltransferase which specifically dimethylates mitochondrial 12S rRNA at the conserved stem loop. Also required for basal transcription of mitochondrial DNA. Stimulates transcription independently of the methyltransferase activity. In Caenorhabditis elegans, this protein is Dimethyladenosine transferase 1, mitochondrial (tfbm-1).